Reading from the N-terminus, the 294-residue chain is N-acetylmuramic acid 6-phosphate etherase (294 aa).

The SIS domain maps to 54–217; sequence VIQSFEEEGR…STASMIGVGK (164 aa). Glu82 serves as the catalytic Proton donor. Glu113 is a catalytic residue.

The protein belongs to the GCKR-like family. MurNAc-6-P etherase subfamily. In terms of assembly, homodimer.

It carries out the reaction N-acetyl-D-muramate 6-phosphate + H2O = N-acetyl-D-glucosamine 6-phosphate + (R)-lactate. The protein operates within amino-sugar metabolism; N-acetylmuramate degradation. In terms of biological role, specifically catalyzes the cleavage of the D-lactyl ether substituent of MurNAc 6-phosphate, producing GlcNAc 6-phosphate and D-lactate. The polypeptide is N-acetylmuramic acid 6-phosphate etherase (Bacillus thuringiensis subsp. konkukian (strain 97-27)).